The primary structure comprises 121 residues: Ribonuclease P protein component (121 aa).

The protein belongs to the RnpA family. Consists of a catalytic RNA component (M1 or rnpB) and a protein subunit.

The enzyme catalyses Endonucleolytic cleavage of RNA, removing 5'-extranucleotides from tRNA precursor.. Its function is as follows. RNaseP catalyzes the removal of the 5'-leader sequence from pre-tRNA to produce the mature 5'-terminus. It can also cleave other RNA substrates such as 4.5S RNA. The protein component plays an auxiliary but essential role in vivo by binding to the 5'-leader sequence and broadening the substrate specificity of the ribozyme. This is Ribonuclease P protein component from Desulfosudis oleivorans (strain DSM 6200 / JCM 39069 / Hxd3) (Desulfococcus oleovorans).